A 283-amino-acid chain; its full sequence is Bifunctional protein FolD (283 aa).

Residues 166-168 and isoleucine 232 contribute to the NADP(+) site; that span reads GAS.

It belongs to the tetrahydrofolate dehydrogenase/cyclohydrolase family. In terms of assembly, homodimer.

The enzyme catalyses (6R)-5,10-methylene-5,6,7,8-tetrahydrofolate + NADP(+) = (6R)-5,10-methenyltetrahydrofolate + NADPH. It carries out the reaction (6R)-5,10-methenyltetrahydrofolate + H2O = (6R)-10-formyltetrahydrofolate + H(+). The protein operates within one-carbon metabolism; tetrahydrofolate interconversion. Its function is as follows. Catalyzes the oxidation of 5,10-methylenetetrahydrofolate to 5,10-methenyltetrahydrofolate and then the hydrolysis of 5,10-methenyltetrahydrofolate to 10-formyltetrahydrofolate. The protein is Bifunctional protein FolD of Mannheimia succiniciproducens (strain KCTC 0769BP / MBEL55E).